A 1138-amino-acid chain; its full sequence is Pesticidal crystal protein Cry7Ab (1138 aa).

Belongs to the delta endotoxin family.

Its function is as follows. Promotes colloidosmotic lysis by binding to the midgut epithelial cells of Coleoptera. This chain is Pesticidal crystal protein Cry7Ab (cry7Ab), found in Bacillus thuringiensis subsp. dakota.